A 479-amino-acid polypeptide reads, in one-letter code: Ribosomal RNA small subunit methyltransferase F (479 aa).

S-adenosyl-L-methionine is bound by residues 125-131, glutamate 149, aspartate 176, and aspartate 194; that span reads AAAPGSK. Cysteine 247 serves as the catalytic Nucleophile.

This sequence belongs to the class I-like SAM-binding methyltransferase superfamily. RsmB/NOP family.

Its subcellular location is the cytoplasm. The catalysed reaction is cytidine(1407) in 16S rRNA + S-adenosyl-L-methionine = 5-methylcytidine(1407) in 16S rRNA + S-adenosyl-L-homocysteine + H(+). Specifically methylates the cytosine at position 1407 (m5C1407) of 16S rRNA. The chain is Ribosomal RNA small subunit methyltransferase F from Salmonella newport (strain SL254).